A 253-amino-acid chain; its full sequence is Major prion protein (253 aa).

The first 22 residues, 1–22 (MANLGCWMLVLFVATWSDLGLC), serve as a signal peptide directing secretion. The interval 23-230 (KKRPKPGGWN…ESQAYYQRGS (208 aa)) is interaction with GRB2, ERI3 and SYN1. The tract at residues 26–108 (PKPGGWNTGG…WHKPSKPKTS (83 aa)) is disordered. Tandem repeats lie at residues 51–59 (PQGGGGWGQ), 60–67 (PHGGGWGQ), 68–75 (PHGGGWGQ), 76–83 (PHGGGWGQ), and 84–91 (PHGGGWGQ). Positions 51–91 (PQGGGGWGQPHGGGWGQPHGGGWGQPHGGGWGQPHGGGWGQ) are 5 X 8 AA tandem repeats of P-H-G-G-G-W-G-Q. The span at 52 to 95 (QGGGGWGQPHGGGWGQPHGGGWGQPHGGGWGQPHGGGWGQGGGT) shows a compositional bias: gly residues. Positions 61, 62, 63, 69, 70, 71, 77, 78, 79, 85, 86, and 87 each coordinate Cu(2+). Residues 98 to 108 (QWHKPSKPKTS) show a composition bias toward basic residues. A disulfide bond links Cys-179 and Cys-214. N-linked (GlcNAc...) asparagine glycosylation is found at Asn-181 and Asn-197. The GPI-anchor amidated serine moiety is linked to residue Ser-230. Residues 231–253 (SMVLFSSPPVILLISFLIFLIVG) constitute a propeptide, removed in mature form.

The protein belongs to the prion family. As to quaternary structure, monomer and homodimer. Has a tendency to aggregate into amyloid fibrils containing a cross-beta spine, formed by a steric zipper of superposed beta-strands. Soluble oligomers may represent an intermediate stage on the path to fibril formation. Copper binding may promote oligomerization. Interacts with GRB2, APP, ERI3/PRNPIP and SYN1. Mislocalized cytosolically exposed PrP interacts with MGRN1; this interaction alters MGRN1 subcellular location and causes lysosomal enlargement. Interacts with KIAA1191.

It is found in the cell membrane. The protein localises to the golgi apparatus. Its primary physiological function is unclear. Has cytoprotective activity against internal or environmental stresses. May play a role in neuronal development and synaptic plasticity. May be required for neuronal myelin sheath maintenance. May play a role in iron uptake and iron homeostasis. Soluble oligomers are toxic to cultured neuroblastoma cells and induce apoptosis (in vitro). Association with GPC1 (via its heparan sulfate chains) targets PRNP to lipid rafts. Also provides Cu(2+) or Zn(2+) for the ascorbate-mediated GPC1 deaminase degradation of its heparan sulfate side chains. The chain is Major prion protein (PRNP) from Macaca fascicularis (Crab-eating macaque).